Here is a 355-residue protein sequence, read N- to C-terminus: Ribosomal RNA large subunit methyltransferase M (355 aa).

S-adenosyl-L-methionine-binding positions include serine 191, 224-227 (APGG), aspartate 243, aspartate 263, and aspartate 279. Lysine 308 serves as the catalytic Proton acceptor.

Belongs to the class I-like SAM-binding methyltransferase superfamily. RNA methyltransferase RlmE family. RlmM subfamily. In terms of assembly, monomer.

The protein resides in the cytoplasm. The enzyme catalyses cytidine(2498) in 23S rRNA + S-adenosyl-L-methionine = 2'-O-methylcytidine(2498) in 23S rRNA + S-adenosyl-L-homocysteine + H(+). In terms of biological role, catalyzes the 2'-O-methylation at nucleotide C2498 in 23S rRNA. The protein is Ribosomal RNA large subunit methyltransferase M of Stenotrophomonas maltophilia (strain K279a).